A 229-amino-acid chain; its full sequence is Cytidylate kinase (229 aa).

12 to 20 (GPSGVGKST) lines the ATP pocket.

It belongs to the cytidylate kinase family. Type 1 subfamily.

The protein localises to the cytoplasm. It catalyses the reaction CMP + ATP = CDP + ADP. The enzyme catalyses dCMP + ATP = dCDP + ADP. The sequence is that of Cytidylate kinase from Mesomycoplasma hyopneumoniae (strain 232) (Mycoplasma hyopneumoniae).